The primary structure comprises 190 residues: Ribosome maturation factor RimM (190 aa).

One can recognise a PRC barrel domain in the interval Glu95 to Leu177. The interval Leu170–Glu190 is disordered. Residues Pro181–Glu190 show a composition bias toward pro residues.

It belongs to the RimM family. In terms of assembly, binds ribosomal protein uS19.

The protein localises to the cytoplasm. In terms of biological role, an accessory protein needed during the final step in the assembly of 30S ribosomal subunit, possibly for assembly of the head region. Essential for efficient processing of 16S rRNA. May be needed both before and after RbfA during the maturation of 16S rRNA. It has affinity for free ribosomal 30S subunits but not for 70S ribosomes. In Rhizobium rhizogenes (strain K84 / ATCC BAA-868) (Agrobacterium radiobacter), this protein is Ribosome maturation factor RimM.